Here is a 188-residue protein sequence, read N- to C-terminus: Peptide deformylase (188 aa).

Fe cation-binding residues include Cys94 and His136. Glu137 is a catalytic residue. Residue His140 coordinates Fe cation.

It belongs to the polypeptide deformylase family. Fe(2+) serves as cofactor.

It carries out the reaction N-terminal N-formyl-L-methionyl-[peptide] + H2O = N-terminal L-methionyl-[peptide] + formate. Removes the formyl group from the N-terminal Met of newly synthesized proteins. Requires at least a dipeptide for an efficient rate of reaction. N-terminal L-methionine is a prerequisite for activity but the enzyme has broad specificity at other positions. This Pelodictyon phaeoclathratiforme (strain DSM 5477 / BU-1) protein is Peptide deformylase.